A 213-amino-acid polypeptide reads, in one-letter code: Peroxynitrite isomerase (213 aa).

Residues 1–10 show a composition bias toward low complexity; that stretch reads MGADATGDTA. The segment at 1 to 26 is disordered; sequence MGADATGDTAARGDRAAHGDTASGGA. The GXWXGXG signature appears at 51 to 57; that stretch reads GTWRGEG. Histidine 203 provides a ligand contact to heme b.

This sequence belongs to the nitrobindin family. In terms of assembly, homodimer. The cofactor is heme b.

The enzyme catalyses peroxynitrite = nitrate. Its pathway is nitrogen metabolism. Functionally, heme-binding protein able to scavenge peroxynitrite and to protect free L-tyrosine against peroxynitrite-mediated nitration, by acting as a peroxynitrite isomerase that converts peroxynitrite to nitrate. Therefore, this protein likely plays a role in peroxynitrite sensing and in the detoxification of reactive nitrogen and oxygen species (RNS and ROS, respectively). Is able to bind nitric oxide (NO) in vitro, but may act as a sensor of peroxynitrite levels in vivo. The chain is Peroxynitrite isomerase from Parafrankia sp. (strain EAN1pec).